The following is a 280-amino-acid chain: Tryptophan synthase alpha chain (280 aa).

Residues E50 and D61 each act as proton acceptor in the active site.

Belongs to the TrpA family. Tetramer of two alpha and two beta chains.

The enzyme catalyses (1S,2R)-1-C-(indol-3-yl)glycerol 3-phosphate + L-serine = D-glyceraldehyde 3-phosphate + L-tryptophan + H2O. The protein operates within amino-acid biosynthesis; L-tryptophan biosynthesis; L-tryptophan from chorismate: step 5/5. In terms of biological role, the alpha subunit is responsible for the aldol cleavage of indoleglycerol phosphate to indole and glyceraldehyde 3-phosphate. The chain is Tryptophan synthase alpha chain from Methylorubrum extorquens (strain CM4 / NCIMB 13688) (Methylobacterium extorquens).